Reading from the N-terminus, the 260-residue chain is MRPAILLTNDDGVNSLGIWAAYEALSPIADVTVVAPATQQSAVGRSISIFEPIRANRIKINGNPAWAVGGKPTDAAIIGLYALKLAPALVVSGINIGENLSYESIMTSGTVGAALEAANQGTKGIAFSLQVEDQGDKFDDPGQSAQSFDAAKKVVRDVVERVLASGFPPAADVINVNIPSTIKGGYEVTHLARKLFHTGVEKRLDPRGRPYFWINGPLLEDAEEGTDVHAVRKGNVSITPITLDCTARTADEDTKKIFLK.

A divalent metal cation is bound by residues Asp10, Asp11, Ser41, and Asn95.

This sequence belongs to the SurE nucleotidase family. A divalent metal cation is required as a cofactor.

Its subcellular location is the cytoplasm. The enzyme catalyses a ribonucleoside 5'-phosphate + H2O = a ribonucleoside + phosphate. Functionally, nucleotidase that shows phosphatase activity on nucleoside 5'-monophosphates. In Methanoregula boonei (strain DSM 21154 / JCM 14090 / 6A8), this protein is 5'-nucleotidase SurE.